The chain runs to 679 residues: Stress-70 protein, mitochondrial (679 aa).

Residues 1-46 (MISASRAAAARLVGTTASRSPAAARHQDGWNGLSHEAFRFVSRRDY) constitute a mitochondrion transit peptide. An interaction with NFS1 region spans residues 1 to 432 (MISASRAAAA…IQGGVLAGDV (432 aa)). ADP contacts are provided by T63 and N64. Positions 63 to 431 (TNSCVAVMEG…AIQGGVLAGD (369 aa)) are nucleotide-binding domain (NBD). The residue at position 76 (K76) is an N6-acetyllysine. Phosphothreonine is present on T87. Residues K135 and K138 each carry the N6-acetyllysine; alternate modification. K135 and K138 each carry N6-succinyllysine; alternate. The residue at position 143 (K143) is an N6-acetyllysine. K206 carries the N6-acetyllysine; alternate modification. Position 206 is an N6-succinyllysine; alternate (K206). K206 bears the N6-malonyllysine; alternate mark. N6-acetyllysine occurs at positions 234 and 288. An N6-acetyllysine; alternate modification is found at K300. Position 300 is an N6-succinyllysine; alternate (K300). The ADP site is built by E313, K316, and S320. K360 carries the post-translational modification N6-acetyllysine; alternate. K360 carries the N6-succinyllysine; alternate modification. N6-succinyllysine is present on K368. ADP-binding residues include G388 and R391. At K394 the chain carries N6-succinyllysine. At S408 the chain carries Phosphoserine. An interdomain linker region spans residues 432-441 (VTDVLLLDVT). The tract at residues 432–679 (VTDVLLLDVT…QKEDQKEEKQ (248 aa)) is interaction with FXN and ISCU. The tract at residues 442–679 (PLSLGIETLG…QKEDQKEEKQ (238 aa)) is substrate-binding domain (SBD). R513 bears the Omega-N-methylarginine mark. N6-acetyllysine; alternate is present on residues K567 and K600. N6-succinyllysine; alternate occurs at positions 567 and 600. An N6-succinyllysine modification is found at K610. K612 is subject to N6-acetyllysine. An N6-acetyllysine; alternate modification is found at K646. Residue K646 is modified to N6-succinyllysine; alternate. The disordered stretch occupies residues 655–679 (MASEREGSGSSSTGEQKEDQKEEKQ). A compositionally biased stretch (basic and acidic residues) spans 669–679 (EQKEDQKEEKQ).

It belongs to the heat shock protein 70 family. In terms of assembly, interacts strongly with the intermediate form of FXN and weakly with its mature form. Interacts with HSCB. Associates with the mitochondrial contact site and cristae organizing system (MICOS) complex, composed of at least MICOS10/MIC10, CHCHD3/MIC19, CHCHD6/MIC25, APOOL/MIC27, IMMT/MIC60, APOO/MIC23/MIC26 and QIL1/MIC13. This complex was also known under the names MINOS or MitOS complex. The MICOS complex associates with mitochondrial outer membrane proteins SAMM50, MTX1, MTX2 and DNAJC11, mitochondrial inner membrane protein TMEM11 and with HSPA9. Interacts with DNLZ, the interaction is required to prevent self-aggregation. Interacts with TESPA1. Interacts with PDPN. Interacts with NFU1, NFS1 and ISCU. Interacts with TP53; the interaction promotes TP53 degradation. Interacts (via SBD domain) with UBXN2A; the interaction with UBXN2A inhibits HSPA9 interaction with and degradation of TP53, thereby promotes TP53 translocation to the nucleus. Interacts with ITPR1 AND VDAC1; this interaction couples ITPR1 to VDAC1. Component of the TIM23 mitochondrial inner membrane pre-sequence translocase complex.

The protein resides in the mitochondrion. It localises to the nucleus. It is found in the nucleolus. Its subcellular location is the cytoplasm. The protein localises to the mitochondrion matrix. It carries out the reaction ATP + H2O = ADP + phosphate + H(+). Its activity is regulated as follows. The chaperone activity is regulated by ATP-induced allosteric coupling of the nucleotide-binding (NBD) and substrate-binding (SBD) domains. ATP binding in the nucleotide-binding pocket (NBP) leads to a conformational change in the NBD, which is transferred through the interdomain linker (IDL) to the substrate-binding domain (SBD). This elicits a reduced substrate affinity and a faster substrate exchange rate. Upon hydrolysis of ATP to ADP, the protein undergoes a conformational change that increases its affinity for substrate proteins. It cycles through repeated phases of ATP hydrolysis and nucleotide exchange, facilitating repeated cycles of substrate binding and release. Functions in collaboration with co-chaperones. Functions with the co-chaperone, DNLZ, to maintain solubility and regulate ATP hydrolysis. Nucleotide exchange factors, GRPEL1 and GRPEL2, accelerate nucleotide exchange. Its function is as follows. Mitochondrial chaperone that plays a key role in mitochondrial protein import, folding, and assembly. Plays an essential role in the protein quality control system, the correct folding of proteins, the re-folding of misfolded proteins, and the targeting of proteins for subsequent degradation. These processes are achieved through cycles of ATP binding, ATP hydrolysis, and ADP release, mediated by co-chaperones. In mitochondria, it associates with the TIM (translocase of the inner membrane) protein complex to assist in the import and folding of mitochondrial proteins. Plays an important role in mitochondrial iron-sulfur cluster (ISC) biogenesis, interacts with and stabilizes ISC cluster assembly proteins FXN, NFU1, NFS1 and ISCU. Regulates erythropoiesis via stabilization of ISC assembly. Regulates mitochondrial calcium-dependent apoptosis by coupling two calcium channels, ITPR1 and VDAC1, at the mitochondria-associated endoplasmic reticulum (ER) membrane to facilitate calcium transport from the ER lumen to the mitochondria intermembrane space, providing calcium for the downstream calcium channel MCU, which releases it into the mitochondrial matrix. Although primarily located in the mitochondria, it is also found in other cellular compartments. In the cytosol, it associates with proteins involved in signaling, apoptosis, or senescence. It may play a role in cell cycle regulation via its interaction with and promotion of degradation of TP53. May play a role in the control of cell proliferation and cellular aging. Protects against reactive oxygen species (ROS). Extracellular HSPA9 plays a cytoprotective role by preventing cell lysis following immune attack by the membrane attack complex by disrupting formation of the complex. This chain is Stress-70 protein, mitochondrial, found in Rattus norvegicus (Rat).